A 93-amino-acid chain; its full sequence is Phosphoribosyl-ATP pyrophosphatase (93 aa).

This sequence belongs to the PRA-PH family.

It is found in the cytoplasm. It carries out the reaction 1-(5-phospho-beta-D-ribosyl)-ATP + H2O = 1-(5-phospho-beta-D-ribosyl)-5'-AMP + diphosphate + H(+). The protein operates within amino-acid biosynthesis; L-histidine biosynthesis; L-histidine from 5-phospho-alpha-D-ribose 1-diphosphate: step 2/9. The chain is Phosphoribosyl-ATP pyrophosphatase from Metallosphaera sedula (strain ATCC 51363 / DSM 5348 / JCM 9185 / NBRC 15509 / TH2).